The chain runs to 520 residues: MEVLESGEQGVLQWDRKLSELSEPGDGEALMYHTHFSELLDEFSQNVLGQLLNDPFLSEKSVSTEVEPSPMSPAPLIQAEHSYSLCEEPRAQSPFTHITTSDSFNDDEVESEKWYLSTDFPSTTIKTEPITDEPPPGLVPSVTLTITAISTPFEKEEPPLEMNTGVDSSCQTIIPKIKLEPHEVDQFLNFSPKEAPVDHLHLPPTPPSSHGSDSEGSLSPNPRLHPFSLPQTHSPSRAAPRAPSALSSSPLLTAPHKLQGSGPLVLTEEEKRTLIAEGYPIPTKLPLTKSEEKALKKIRRKIKNKISAQESRRKKKEYMDSLEKKVESCSTENLELRKKVEVLENTNRTLLQQLQKLQTLVMGKVSRTCKLAGTQTGTCLMVVVLCFAVAFGSFFQGYGPYPSATKMALPSQHSLQEPYTASVVRSRNLLIYEEHSPPEEPSSPGSAGELGGWDRGSSLLRVSGLESRPDVDLPHFIISNETSLEKSVLLELQQHLVSAKLEGNETLKVVELDRRVNTTF.

Residues 1 to 378 (MEVLESGEQG…CKLAGTQTGT (378 aa)) lie on the Cytoplasmic side of the membrane. Ser93 bears the Phosphoserine mark. Lys178 participates in a covalent cross-link: Glycyl lysine isopeptide (Lys-Gly) (interchain with G-Cter in SUMO2). A Phosphoserine modification is found at Ser191. The disordered stretch occupies residues 195–264 (APVDHLHLPP…PHKLQGSGPL (70 aa)). 2 stretches are compositionally biased toward low complexity: residues 208–220 (SSHGSDSEGSLSP) and 234–255 (SPSRAAPRAPSALSSSPLLTAP). The bZIP domain occupies 294-357 (ALKKIRRKIK…RTLLQQLQKL (64 aa)). The interval 296–325 (KKIRRKIKNKISAQESRRKKKEYMDSLEKK) is basic motif. Residues 336-357 (LRKKVEVLENTNRTLLQQLQKL) form a leucine-zipper region. Residues 379-399 (CLMVVVLCFAVAFGSFFQGYG) form a helical; Signal-anchor for type II membrane protein membrane-spanning segment. Over 400 to 520 (PYPSATKMAL…ELDRRVNTTF (121 aa)) the chain is Lumenal. The short motif at 427–430 (RNLL) is the S1P recognition element. Residues Asn480, Asn504, and Asn517 are each glycosylated (N-linked (GlcNAc...) asparagine).

The protein belongs to the bZIP family. ATF subfamily. Binds DNA as a dimer. Post-translationally, upon ER stress, translocated to the Golgi apparatus, where it is processed by regulated intramembrane proteolysis (RIP) to release the cytosol-facing N-terminal transcription factor domain. The cleavage is performed sequentially by site-1 and site-2 proteases (S1P/MBTPS1 and S2P/MBTPS2). In terms of processing, N-glycosylated. Ubiquitinated by HRD1/SYVN1; undergoes 'Lys-48'-linked ubiquitination, followed by rapid proteasomal degradation under normal conditions. Upon ER stress, SYVN1 E3 ubiquitin-protein ligase dissociates from its substrate, ubiquitination does not occur and CREB3L2 is stabilized.

Its subcellular location is the endoplasmic reticulum membrane. The protein localises to the nucleus. Functionally, transcription factor involved in unfolded protein response (UPR). In the absence of endoplasmic reticulum (ER) stress, inserted into ER membranes, with N-terminal DNA-binding and transcription activation domains oriented toward the cytosolic face of the membrane. In response to ER stress, transported to the Golgi, where it is cleaved in a site-specific manner by resident proteases S1P/MBTPS1 and S2P/MBTPS2. The released N-terminal cytosolic domain is translocated to the nucleus to effect transcription of specific target genes. Plays a critical role in chondrogenesis by activating the transcription of SEC23A, which promotes the transport and secretion of cartilage matrix proteins, and possibly that of ER biogenesis-related genes. In a neuroblastoma cell line, protects cells from ER stress-induced death. In vitro activates transcription of target genes via direct binding to the CRE site. The sequence is that of Cyclic AMP-responsive element-binding protein 3-like protein 2 (CREB3L2) from Pongo abelii (Sumatran orangutan).